A 332-amino-acid polypeptide reads, in one-letter code: MPGPLRVLITGAAGQIAYNLSNMVANGNLFGKDQQIILHLLDIPEAKTVLDGVVMELQDCAFTVLAGIVPTHCLKEAFTDIDVALMVGAMPRKQGMERRDLLSSNVKIFKEQGEALDKYAKKTVKVLVVGNPANTNCLIMSKYAPSIPKENFTALTRLDHNRAIYQVAAKAGVPNTCVKNVCIWGNHSNKQFPDLSHAVVTKDGKQHPAKELINDEKWVKEVFIPCVQNRGAAVIGLRKLSRAASAAKAIVDQMRDWWFGTKEGEWVSMSVYSTGDHYGAPKDIYFSFPVTIKDGHYKVVDGLSMDEWSRSLFNLSADELVDEREVALASFK.

NAD(+) is bound at residue Gly-11 to Ala-17. Positions 92 and 98 each coordinate substrate. Residues Asn-105, Gln-112, and Val-129–Asn-131 contribute to the NAD(+) site. Asn-131 and Arg-162 together coordinate substrate. His-187 serves as the catalytic Proton acceptor.

This sequence belongs to the LDH/MDH superfamily. MDH type 2 family. As to quaternary structure, homodimer.

Its subcellular location is the cytoplasm. The catalysed reaction is (S)-malate + NAD(+) = oxaloacetate + NADH + H(+). This Echinococcus granulosus (Hydatid tapeworm) protein is Malate dehydrogenase, cytoplasmic (MDH).